A 234-amino-acid chain; its full sequence is MPSGCHSSPPSGLRGDMASLVPLSPYLSPTVLLLVSCDLGFVRADRPPSPVNVTVTHLRANSATVSWDVPEGNIVIGYSISQQRQNGPGQRVIREVNTTTRACALWGLAEDSDYTVQVRSIGLRGESPPGPRVHFRTLKGSDRLPSNSSSPGDITVEGLDGERPLQTGEVVIIVVVLLMWAAVIGLFCRQYDIIKDNDSNNNPKEKGKGPEQSPQGRPVGTRQKKSPSINTIDV.

A signal peptide spans M1 to A44. Over D45–T167 the chain is Extracellular. The Fibronectin type-III domain maps to P47–G140. 3 N-linked (GlcNAc...) asparagine glycosylation sites follow: N52, N97, and N147. The segment at G122 to D160 is disordered. Residues G168–C188 form a helical membrane-spanning segment. The Cytoplasmic segment spans residues R189–V234. Residues N197–G209 are compositionally biased toward basic and acidic residues. The interval N197 to V234 is disordered.

As to expression, highly expressed in the liver and the brain, including in the cortex, hypothalamus and hippocampus. Also expressed in adipose tissue.

It is found in the membrane. The protein resides in the secreted. Has anti-inflammatory properties. In the colon, acts on macrophages to down-regulate inflammation. May suppress osteoclastogenesis and mature osteoclast resorptive function. In white adipose tissue, decreases local inflammation, via interaction with GPR116. Also required for proper systemic glucose tolerance, specifically sensitizing white adipocytes to insulin and promoting glucose uptake. The insulin sensitizing function in adipose tissue is mediated by interaction with ADGRF5/GPR116 and activation of cAMP signaling. The protein is Fibronectin type III domain-containing protein 4 (FNDC4) of Homo sapiens (Human).